The primary structure comprises 313 residues: N-acetyl-gamma-glutamyl-phosphate reductase (313 aa).

Cys117 is an active-site residue.

The protein belongs to the NAGSA dehydrogenase family. Type 2 subfamily.

Its subcellular location is the cytoplasm. It catalyses the reaction N-acetyl-L-glutamate 5-semialdehyde + phosphate + NADP(+) = N-acetyl-L-glutamyl 5-phosphate + NADPH + H(+). It participates in amino-acid biosynthesis; L-arginine biosynthesis; N(2)-acetyl-L-ornithine from L-glutamate: step 3/4. In terms of biological role, catalyzes the NADPH-dependent reduction of N-acetyl-5-glutamyl phosphate to yield N-acetyl-L-glutamate 5-semialdehyde. The sequence is that of N-acetyl-gamma-glutamyl-phosphate reductase from Burkholderia orbicola (strain MC0-3).